Reading from the N-terminus, the 373-residue chain is Nuclear hormone receptor family member nhr-69 (373 aa).

Positions 3-78 (EEICHICNDK…AGMKSNAIQN (76 aa)) form a DNA-binding region, nuclear receptor. NR C4-type zinc fingers lie at residues 6 to 26 (CHIC…CDGC) and 42 to 66 (CRFE…LQKC). In terms of domain architecture, NR LBD spans 93–344 (EKEDLIDQLV…SLMEELILND (252 aa)).

This sequence belongs to the nuclear hormone receptor family. As to quaternary structure, interacts with R-SMAD daf-8. In terms of tissue distribution, expressed in the ASI neurons, hypodermis, and in tail neurons.

It is found in the nucleus. Functionally, orphan nuclear receptor which, in cooperation with R-SMAD daf-8, modulates the Insulin/IGF-1-like signaling (IIS) pathway, perhaps by regulating expression of the potassium channel exp-2, which in turn modulates the secretion of insulin-like peptide daf-28. In Caenorhabditis elegans, this protein is Nuclear hormone receptor family member nhr-69 (nhr-69).